A 267-amino-acid chain; its full sequence is Methylglyoxal reductase DkgB (267 aa).

Tyr39 functions as the Proton donor in the catalytic mechanism. His97 serves as a coordination point for substrate. 179 to 231 (MTLAYGKALKDEVIARIAAKHNATPAQVILAWAMGEGYSVIPSSTKRENLESN) lines the NADP(+) pocket.

The protein belongs to the aldo/keto reductase family. As to quaternary structure, monomer.

Its subcellular location is the cytoplasm. It catalyses the reaction hydroxyacetone + NADP(+) = methylglyoxal + NADPH + H(+). Aldo-keto reductase that significantly contributes to cellular methylglyoxal detoxification by catalyzing the NADPH-dependent conversion of methylglyoxal to acetol. This Escherichia coli O157:H7 protein is Methylglyoxal reductase DkgB.